The chain runs to 384 residues: MNKLLMVKYASEIFLKGLNKNKFEKILKHNIATALNGVKFDFVFDSGRWFIKGEDLEEVVDRVRNVFGVAEVCIVTEIENDFDTIKNQALLAVKESGKGTFKVETNRANKGFPLNSMDINREVGAYILKNNDEVKVDIHNPECLVNIEIRKKTYIYSKRIKGVNGMPYKTNGQTLLMLSGGIDSPVAGYMMARRGVEVSGVYFHSAPYTSERAKDKVKDLARILTKYIGEMTLYVVPFTDIQMQIIEKCREDELTIIMRRFMMSIACKIAEDKGMESVATGESIGQVASQTMQGLVVSNDCADRPVFRPLISMDKIDIMDISRKIGTYETSILPYEDCCTIFVPKHPKTKPILGQIRKAESVLDKEKLINDAVEKMEVIQIKND.

Residues 57 to 160 (EEVVDRVRNV…KKTYIYSKRI (104 aa)) enclose the THUMP domain. Residues 177 to 178 (ML), 202 to 203 (YF), R259, G281, and Q290 each bind ATP.

This sequence belongs to the ThiI family.

Its subcellular location is the cytoplasm. It carries out the reaction [ThiI sulfur-carrier protein]-S-sulfanyl-L-cysteine + a uridine in tRNA + 2 reduced [2Fe-2S]-[ferredoxin] + ATP + H(+) = [ThiI sulfur-carrier protein]-L-cysteine + a 4-thiouridine in tRNA + 2 oxidized [2Fe-2S]-[ferredoxin] + AMP + diphosphate. It catalyses the reaction [ThiS sulfur-carrier protein]-C-terminal Gly-Gly-AMP + S-sulfanyl-L-cysteinyl-[cysteine desulfurase] + AH2 = [ThiS sulfur-carrier protein]-C-terminal-Gly-aminoethanethioate + L-cysteinyl-[cysteine desulfurase] + A + AMP + 2 H(+). It functions in the pathway cofactor biosynthesis; thiamine diphosphate biosynthesis. Catalyzes the ATP-dependent transfer of a sulfur to tRNA to produce 4-thiouridine in position 8 of tRNAs, which functions as a near-UV photosensor. Also catalyzes the transfer of sulfur to the sulfur carrier protein ThiS, forming ThiS-thiocarboxylate. This is a step in the synthesis of thiazole, in the thiamine biosynthesis pathway. The sulfur is donated as persulfide by IscS. This chain is Probable tRNA sulfurtransferase, found in Clostridium acetobutylicum (strain ATCC 824 / DSM 792 / JCM 1419 / IAM 19013 / LMG 5710 / NBRC 13948 / NRRL B-527 / VKM B-1787 / 2291 / W).